Here is a 222-residue protein sequence, read N- to C-terminus: Small ribosomal subunit protein uS3 (222 aa).

Residues 39–108 (IRKFVKNKLS…NVLINIVEVK (70 aa)) enclose the KH type-2 domain.

The protein belongs to the universal ribosomal protein uS3 family. Part of the 30S ribosomal subunit. Forms a tight complex with proteins S10 and S14.

Its function is as follows. Binds the lower part of the 30S subunit head. Binds mRNA in the 70S ribosome, positioning it for translation. In Clostridium acetobutylicum (strain ATCC 824 / DSM 792 / JCM 1419 / IAM 19013 / LMG 5710 / NBRC 13948 / NRRL B-527 / VKM B-1787 / 2291 / W), this protein is Small ribosomal subunit protein uS3.